A 501-amino-acid polypeptide reads, in one-letter code: Glutamate--tRNA ligase (501 aa).

The 'HIGH' region signature appears at 10-20 (PSPTGSLHIGG). Residues 251–255 (KLSKR) carry the 'KMSKS' region motif. K254 lines the ATP pocket.

This sequence belongs to the class-I aminoacyl-tRNA synthetase family. Glutamate--tRNA ligase type 1 subfamily. As to quaternary structure, monomer.

The protein localises to the cytoplasm. The catalysed reaction is tRNA(Glu) + L-glutamate + ATP = L-glutamyl-tRNA(Glu) + AMP + diphosphate. Its function is as follows. Catalyzes the attachment of glutamate to tRNA(Glu) in a two-step reaction: glutamate is first activated by ATP to form Glu-AMP and then transferred to the acceptor end of tRNA(Glu). This chain is Glutamate--tRNA ligase, found in Desulforudis audaxviator (strain MP104C).